The chain runs to 77 residues: MSIEERVKKIIVDQLGVKAEDVKPEASFIEDLGADSLDTVELVMALEEEFDIEIPDEEAEKITTVQSAIDYVAKANA.

The 76-residue stretch at 1 to 76 folds into the Carrier domain; the sequence is MSIEERVKKI…SAIDYVAKAN (76 aa). Residue Ser36 is modified to O-(pantetheine 4'-phosphoryl)serine.

Belongs to the acyl carrier protein (ACP) family. Post-translationally, 4'-phosphopantetheine is transferred from CoA to a specific serine of apo-ACP by AcpS. This modification is essential for activity because fatty acids are bound in thioester linkage to the sulfhydryl of the prosthetic group.

Its subcellular location is the cytoplasm. It functions in the pathway lipid metabolism; fatty acid biosynthesis. Its function is as follows. Carrier of the growing fatty acid chain in fatty acid biosynthesis. The sequence is that of Acyl carrier protein from Haemophilus ducreyi (strain 35000HP / ATCC 700724).